The chain runs to 1038 residues: Translation initiation factor IF-2 (1038 aa).

The disordered stretch occupies residues 48-426 (DALQGPGGNA…RQRRQEYEAM (379 aa)). The segment covering 58–87 (GKSAAKPGAPRKAAPAKPAAPSPAAAARPA) has biased composition (low complexity). Over residues 88-99 (APKPGAPAPKPA) the composition is skewed to pro residues. Low complexity predominate over residues 100 to 114 (EAPSSTPAAPSAPSA). Pro residues predominate over residues 115 to 125 (GPRPGPKPAPK). Low complexity predominate over residues 126–141 (AAPVTPVPAAEFSAPA). A compositionally biased stretch (pro residues) spans 142–153 (PAQPAAPQPQAP). A compositionally biased stretch (basic and acidic residues) spans 177–199 (DGGRDGGQRDGGRGGERGGDRPA). Positions 200 to 219 (RPAGQGAPRPGGARPAGPRP) are enriched in low complexity. The segment covering 261–277 (SGPGGAPRPQGGQGQGG) has biased composition (gly residues). Low complexity predominate over residues 299–315 (GNRPNPGMMPQRPAAGP). Positions 319-406 (PGGGGRGPGG…GTQGAFGRPG (88 aa)) are enriched in gly residues. The span at 410-419 (RRGRKSKRQR) shows a compositional bias: basic residues. In terms of domain architecture, tr-type G spans 531 to 703 (SRPPVVTVMG…VVLTADASLD (173 aa)). Residues 540 to 547 (GHVDHGKT) form a G1 region. A GTP-binding site is contributed by 540–547 (GHVDHGKT). Residues 565-569 (GITQH) are G2. The G3 stretch occupies residues 590–593 (DTPG). GTP-binding positions include 590–594 (DTPGH) and 644–647 (NKID). The tract at residues 644–647 (NKID) is G4. The G5 stretch occupies residues 680–682 (SAK).

The protein belongs to the TRAFAC class translation factor GTPase superfamily. Classic translation factor GTPase family. IF-2 subfamily.

The protein resides in the cytoplasm. In terms of biological role, one of the essential components for the initiation of protein synthesis. Protects formylmethionyl-tRNA from spontaneous hydrolysis and promotes its binding to the 30S ribosomal subunits. Also involved in the hydrolysis of GTP during the formation of the 70S ribosomal complex. The polypeptide is Translation initiation factor IF-2 (Streptomyces griseus subsp. griseus (strain JCM 4626 / CBS 651.72 / NBRC 13350 / KCC S-0626 / ISP 5235)).